We begin with the raw amino-acid sequence, 313 residues long: MATSHFILKLFLVISFCNVCFASRKLTALVQEPENQLLQYHKGALLFGKISVNLIWYGKFKPSQRAIVSDFITSLSSSTPSKTDPSVAKWWKTTEKYYHLANSKKSLSLYLGKQVLVENYSLGKSLTQKQIVQLASKGEQKDAINIVLTASDVAVDGFCVNRCGTHGSSKGAIIRGKTYKFAYIWVGNSETQCAGYCAWPFHQPIYGPQSPPLVAPNNDVGVDGMVINLASLLAGTATNPFGNGYYQGEADAPLEAASACPGVYAKGAYPGYAGDLLVDKTTGASYNAHGTNGRKYLLPALYDPSTSTCSTLV.

A signal peptide spans 1 to 22 (MATSHFILKLFLVISFCNVCFA). The N-linked (GlcNAc...) asparagine glycan is linked to Asn-119.

This sequence belongs to the EXORDIUM family.

The protein localises to the secreted. Its subcellular location is the extracellular space. It is found in the apoplast. May be involved in the regulation of cell division. The polypeptide is Protein PHOSPHATE-INDUCED 1 (Nicotiana tabacum (Common tobacco)).